An 843-amino-acid polypeptide reads, in one-letter code: Molybdenum cofactor sulfurase (843 aa).

Position 241 is an N6-(pyridoxal phosphate)lysine (K241). The active site involves C405. Residues Q657–S836 enclose the MOSC domain.

The protein belongs to the class-V pyridoxal-phosphate-dependent aminotransferase family. MOCOS subfamily. Pyridoxal 5'-phosphate serves as cofactor.

It catalyses the reaction Mo-molybdopterin + L-cysteine + AH2 = thio-Mo-molybdopterin + L-alanine + A + H2O. Its function is as follows. Sulfurates the molybdenum cofactor. Sulfation of molybdenum is essential for xanthine dehydrogenase (XDH) and aldehyde oxidase (ADO) enzymes in which molybdenum cofactor is liganded by 1 oxygen and 1 sulfur atom in active form. In Aspergillus fumigatus (strain CBS 144.89 / FGSC A1163 / CEA10) (Neosartorya fumigata), this protein is Molybdenum cofactor sulfurase.